A 281-amino-acid polypeptide reads, in one-letter code: Fructose-bisphosphate aldolase class 1 (281 aa).

Lys-191 serves as the catalytic Schiff-base intermediate with dihydroxyacetone-P.

The protein belongs to the DeoC/FbaB aldolase family. Homooctamer.

It is found in the cytoplasm. It catalyses the reaction beta-D-fructose 1,6-bisphosphate = D-glyceraldehyde 3-phosphate + dihydroxyacetone phosphate. Its activity is regulated as follows. Activated by citrate. In Pyrococcus furiosus (strain ATCC 43587 / DSM 3638 / JCM 8422 / Vc1), this protein is Fructose-bisphosphate aldolase class 1 (fba).